Consider the following 149-residue polypeptide: Probable flagellum biosynthesis repressor protein FlbT (149 aa).

The protein belongs to the FlbT family.

Has a post-transcriptional repressor function in flagellum biogenesis. Associates with the 5'-UTR of fljK mRNA and promotes its degradation. This chain is Probable flagellum biosynthesis repressor protein FlbT, found in Allorhizobium ampelinum (strain ATCC BAA-846 / DSM 112012 / S4) (Agrobacterium vitis (strain S4)).